The chain runs to 136 residues: Large ribosomal subunit protein bL17 (136 aa).

This sequence belongs to the bacterial ribosomal protein bL17 family. In terms of assembly, part of the 50S ribosomal subunit. Contacts protein L32.

In Rickettsia africae (strain ESF-5), this protein is Large ribosomal subunit protein bL17.